The primary structure comprises 213 residues: Imidazole glycerol phosphate synthase subunit HisH (213 aa).

Residues 1–212 form the Glutamine amidotransferase type-1 domain; it reads MLAILDYKAG…HRYCTEAADA (212 aa). Cysteine 79 (nucleophile) is an active-site residue. Residues histidine 187 and glutamate 189 contribute to the active site.

As to quaternary structure, heterodimer of HisH and HisF.

Its subcellular location is the cytoplasm. The catalysed reaction is 5-[(5-phospho-1-deoxy-D-ribulos-1-ylimino)methylamino]-1-(5-phospho-beta-D-ribosyl)imidazole-4-carboxamide + L-glutamine = D-erythro-1-(imidazol-4-yl)glycerol 3-phosphate + 5-amino-1-(5-phospho-beta-D-ribosyl)imidazole-4-carboxamide + L-glutamate + H(+). The enzyme catalyses L-glutamine + H2O = L-glutamate + NH4(+). It functions in the pathway amino-acid biosynthesis; L-histidine biosynthesis; L-histidine from 5-phospho-alpha-D-ribose 1-diphosphate: step 5/9. Its function is as follows. IGPS catalyzes the conversion of PRFAR and glutamine to IGP, AICAR and glutamate. The HisH subunit catalyzes the hydrolysis of glutamine to glutamate and ammonia as part of the synthesis of IGP and AICAR. The resulting ammonia molecule is channeled to the active site of HisF. The sequence is that of Imidazole glycerol phosphate synthase subunit HisH from Nitratidesulfovibrio vulgaris (strain DP4) (Desulfovibrio vulgaris).